A 115-amino-acid chain; its full sequence is NADH-ubiquinone oxidoreductase chain 3 (115 aa).

N-formylmethionine is present on M1. 3 consecutive transmembrane segments (helical) span residues 3–23 (LMLA…IAFW), 55–75 (FFLV…LLPL), and 84–104 (LNTM…SLAY).

Core subunit of respiratory chain NADH dehydrogenase (Complex I) which is composed of 45 different subunits. Interacts with TMEM186. Interacts with TMEM242.

Its subcellular location is the mitochondrion inner membrane. It catalyses the reaction a ubiquinone + NADH + 5 H(+)(in) = a ubiquinol + NAD(+) + 4 H(+)(out). Core subunit of the mitochondrial membrane respiratory chain NADH dehydrogenase (Complex I) which catalyzes electron transfer from NADH through the respiratory chain, using ubiquinone as an electron acceptor. Essential for the catalytic activity of complex I. The protein is NADH-ubiquinone oxidoreductase chain 3 of Bos taurus (Bovine).